A 316-amino-acid chain; its full sequence is Vacuolar membrane protein YNL058C (316 aa).

The tract at residues 32-60 (KPTSSVVSETSSKSLPSLTSSAFSTSSGA) is disordered. Residues 93–113 (VYIAVGAVIGAIFISILIWWL) form a helical membrane-spanning segment. Ser-148, Ser-256, and Ser-276 each carry phosphoserine. A disordered region spans residues 240–304 (EEEERKLNLN…KAHKRQAPSM (65 aa)). Positions 256–271 (SPERKEKKINSMEGYH) are enriched in basic and acidic residues.

Belongs to the PRM5 family.

The protein resides in the vacuole membrane. This is Vacuolar membrane protein YNL058C from Saccharomyces cerevisiae (strain ATCC 204508 / S288c) (Baker's yeast).